The sequence spans 37 residues: M-oxotoxin-Ot2a (37 aa).

Expressed by the venom gland.

Its subcellular location is the secreted. Disrupts biological membranes, particularly those rich in phosphocholine. Has antimicrobial activity against Gram-negative bacterium E.coli, Gram-positive bacteria B.subtilis and S.aureus, and hemolytic activity against sheep, pig and guinea pig red blood cells. Has insecticidal activity against S.frugiperda ovarian cells by opening non-selective ion channels. Enhances the insecticidal activity of spider venom neurotoxic peptides. The chain is M-oxotoxin-Ot2a from Oxyopes takobius (Lynx spider).